The following is a 682-amino-acid chain: Methionine--tRNA ligase (682 aa).

A 'HIGH' region motif is present at residues 12–22 (PYANGAIHLGH). Positions 143, 146, 156, and 159 each coordinate Zn(2+). The 'KMSKS' region motif lies at 328-332 (KMSKS). Residue Lys-331 participates in ATP binding. A tRNA-binding domain is found at 580-682 (DFAKLDLRVA…EGIRPGMQVK (103 aa)).

It belongs to the class-I aminoacyl-tRNA synthetase family. MetG type 1 subfamily. Homodimer. The cofactor is Zn(2+).

It is found in the cytoplasm. It catalyses the reaction tRNA(Met) + L-methionine + ATP = L-methionyl-tRNA(Met) + AMP + diphosphate. Its function is as follows. Is required not only for elongation of protein synthesis but also for the initiation of all mRNA translation through initiator tRNA(fMet) aminoacylation. This chain is Methionine--tRNA ligase, found in Actinobacillus pleuropneumoniae serotype 7 (strain AP76).